Here is a 188-residue protein sequence, read N- to C-terminus: Phosphatidylinositol N-acetylglucosaminyltransferase subunit H (188 aa).

This sequence belongs to the PIGH family. As to quaternary structure, component of the glycosylphosphatidylinositol-N-acetylglucosaminyltransferase (GPI-GnT) complex composed at least by PIGA, PIGC, PIGH, PIGP, PIGQ, PIGY and DPM2. Interacts with PIGQ.

Its subcellular location is the cytoplasm. The protein operates within glycolipid biosynthesis; glycosylphosphatidylinositol-anchor biosynthesis. Functionally, part of the glycosylphosphatidylinositol-N-acetylglucosaminyltransferase (GPI-GnT) complex that catalyzes the transfer of N-acetylglucosamine from UDP-N-acetylglucosamine to phosphatidylinositol and participates in the first step of GPI biosynthesis. The sequence is that of Phosphatidylinositol N-acetylglucosaminyltransferase subunit H from Mus musculus (Mouse).